Reading from the N-terminus, the 1052-residue chain is SWI/SNF-related matrix-associated actin-dependent regulator of chromatin subfamily A member 5 (1052 aa).

Pro residues predominate over residues 1 to 15; the sequence is MSSAAEPPPPPPPES. Positions 1–83 are disordered; it reads MSSAAEPPPP…QEPDPTYEEK (83 aa). N-acetylserine is present on Ser2. Over residues 16–55 the composition is skewed to low complexity; the sequence is APSKPAASIASGGSNSSNKGGPEGVAAQAVASAASAGPAD. Position 66 is a phosphoserine (Ser66). Over residues 69-83 the composition is skewed to basic and acidic residues; it reads KQKEIQEPDPTYEEK. A Glycyl lysine isopeptide (Lys-Gly) (interchain with G-Cter in SUMO2) cross-link involves residue Lys83. Thr113 is modified (phosphothreonine). Phosphoserine occurs at positions 116, 137, and 171. The 166-residue stretch at 192–357 folds into the Helicase ATP-binding domain; that stretch reads ISLYENGING…WSLLNFLLPD (166 aa). 205–212 contacts ATP; it reads DEMGLGKT. Positions 308–311 match the DEAH box motif; sequence DEAH. The residue at position 440 (Lys440) is an N6-acetyllysine. The Helicase C-terminal domain occupies 487 to 638; the sequence is VLDKLLPKLK…SIVIQQGRLV (152 aa). Glycyl lysine isopeptide (Lys-Gly) (interchain with G-Cter in SUMO2) cross-links involve residues Lys644, Lys647, Lys694, Lys722, and Lys735. A phosphoserine mark is found at Ser755 and Ser825. SANT domains follow at residues 840-892 and 943-1007; these read QGFT…ERCN and KGKN…LITL. Lys966 is covalently cross-linked (Glycyl lysine isopeptide (Lys-Gly) (interchain with G-Cter in SUMO2)). The interval 1015 to 1052 is disordered; the sequence is LEEKEKAEKKKRGPKPSTQKRKMDGAPDGRGRKKKLKL. Residues 1023-1034 show a composition bias toward basic residues; it reads KKKRGPKPSTQK. Residues 1035–1044 are compositionally biased toward basic and acidic residues; sequence RKMDGAPDGR.

It belongs to the SNF2/RAD54 helicase family. ISWI subfamily. As to quaternary structure, component of the ACF-5 ISWI chromatin-remodeling complex (also called the ACF/WCRF complex) at least composed of SMARCA5/SNF2H and BAZ1A/ACF1, which regulates the spacing of histone octamers on the DNA template to facilitate access to DNA. Within the complex interacts with BAZ1A/ACF1; the interaction is direct and is required to slide nucleosomes from end to center positions on a DNA template in an ATP-dependent manner. Component of the CHRAC ISWI chromatin-remodeling complex at least composed of SMARCA5/SNF2H, BAZ1A/ACF1, CHRAC1 and POLE3; the complex preferentially binds DNA through the CHRAC1-POLE3 heterodimer and possesses ATP-dependent nucleosome-remodeling activity. Within the complex interacts with BAZ1A/ACF1; the interaction is direct and promotes the interaction with the POLE3-CHRAC1 heterodimer. Within the complex interacts with the POLE3-CHRAC1 heterodimer; the interaction is direct and enhances nucleosome sliding activity by the SMARCA5/SNF2H and BAZ1A/ACF1 interaction. Neither POLE3 nor CHRAC1 enhances nucleosome sliding activity of the ACF-5 ISWI chromatin remodeling complex. Component of the WICH-5 ISWI chromatin-remodeling complex (also called the WICH complex) at least composed of SMARCA5/SNF2H and BAZ1B/WSTF, which regulates the spacing of histone octamers on the DNA template to facilitate access to DNA. Within the complex interacts with BAZ1B/WSTF. Component of the NoRC-5 ISWI chromatin-remodeling complex (also called the NoRC chromatin-remodeling complex) at least composed of SMARCA5/SNF2H and BAZ2A/TIP5; the complex suppresses rDNA transcription by a combination of nucleosome remodeling, histone deacetylation, and DNA methylation. Within the complex interacts with BAZ2A/TIP5. Within the complex interacts with HDAC1. Component of the BRF-5 ISWI chromatin-remodeling complex at least composed of SMARCA5/SNF2H and BAZ2B. Within the complex interacts with BAZ2B. Component of the NURF-5 ISWI chromatin-remodeling complex at least composed of SMARCA5/SNF2H and BPTF. Within the complex interacts with BPFT. Component of the CERF-5 ISWI chromatin-remodeling complex at least composed of SMARCA5/SNF2H and CECR2. LUZP1 is detected as part of the CERF-5 complex in embryonic stem cells where it is involved in complex stabilization but is not detected in the complex in the testis. Within the complex interacts with CECR2. Component of the RSF-5 ISWI chromatin-remodeling complex (also called the RSF complex) at least composed of SMARCA5/SNF2H and RSF1. Within the complex interacts with RSF1. Interacts with the cohesin complex component RAD21; the interaction is direct. Interacts with the NuRD complex components HDAC2, RBBP4 and CHD4; the interactions are direct. Interacts with PCNA. Component of the B-WICH complex, at least composed of SMARCA5/SNF2H, BAZ1B/WSTF, SF3B1, DEK, MYO1C, ERCC6, MYBBP1A and DDX21 which positively regulates RNA polymerase III transcription. Interacts with MYO1C. Interacts with BEND3. Interacts with SIRT6; promoting recruitment to DNA damage sites. (Microbial infection) Interacts with JC virus small t antigen. In terms of assembly, (Microbial infection) Interacts with Epstein Barr virus (EBV) lytic switch protein BZLF1; this interaction participates to the activation of early lytic viral genes by BZLF1. As to expression, ubiquitously expressed.

Its subcellular location is the nucleus. It is found in the chromosome. The enzyme catalyses ATP + H2O = ADP + phosphate + H(+). ATPase that possesses intrinsic ATP-dependent nucleosome-remodeling activity. Catalytic subunit of ISWI chromatin-remodeling complexes, which form ordered nucleosome arrays on chromatin and facilitate access to DNA during DNA-templated processes such as DNA replication, transcription, and repair; this may require intact histone H4 tails. Within the ISWI chromatin-remodeling complexes, slides edge- and center-positioned histone octamers away from their original location on the DNA template. Catalytic activity and histone octamer sliding propensity is regulated and determined by components of the ISWI chromatin-remodeling complexes. The BAZ1A/ACF1-, BAZ1B/WSTF-, BAZ2A/TIP5- and BAZ2B-containing ISWI chromatin-remodeling complexes regulate the spacing of nucleosomes along the chromatin and have the ability to slide mononucleosomes to the center of a DNA template in an ATP-dependent manner. The CECR2- and RSF1-containing ISWI chromatin-remodeling complexes do not have the ability to slide mononucleosomes to the center of a DNA template. Binds to core histones together with RSF1, and is required for the assembly of regular nucleosome arrays by the RSF-5 ISWI chromatin-remodeling complex. Involved in DNA replication and together with BAZ1A/ACF1 is required for replication of pericentric heterochromatin in S-phase. Probably plays a role in repression of RNA polymerase I dependent transcription of the rDNA locus, through the recruitment of the SIN3/HDAC1 corepressor complex to the rDNA promoter. Essential component of the WICH-5 ISWI chromatin-remodeling complex (also called the WICH complex), a chromatin-remodeling complex that mobilizes nucleosomes and reconfigures irregular chromatin to a regular nucleosomal array structure. The WICH-5 ISWI chromatin-remodeling complex regulates the transcription of various genes, has a role in RNA polymerase I transcription. Within the B-WICH complex has a role in RNA polymerase III transcription. Mediates the histone H2AX phosphorylation at 'Tyr-142', and is involved in the maintenance of chromatin structures during DNA replication processes. Essential component of NoRC-5 ISWI chromatin-remodeling complex, a complex that mediates silencing of a fraction of rDNA by recruiting histone-modifying enzymes and DNA methyltransferases, leading to heterochromatin formation and transcriptional silencing. This is SWI/SNF-related matrix-associated actin-dependent regulator of chromatin subfamily A member 5 from Homo sapiens (Human).